The primary structure comprises 626 residues: Phosphomethylpyrimidine synthase (626 aa).

Substrate-binding positions include asparagine 237, methionine 266, tyrosine 295, histidine 331, 351–353 (SRG), 392–395 (DGLR), and glutamate 431. Histidine 435 provides a ligand contact to Zn(2+). Tyrosine 458 contacts substrate. Zn(2+) is bound at residue histidine 499. [4Fe-4S] cluster contacts are provided by cysteine 579, cysteine 582, and cysteine 587.

The protein belongs to the ThiC family. Homodimer. [4Fe-4S] cluster is required as a cofactor.

The catalysed reaction is 5-amino-1-(5-phospho-beta-D-ribosyl)imidazole + S-adenosyl-L-methionine = 4-amino-2-methyl-5-(phosphooxymethyl)pyrimidine + CO + 5'-deoxyadenosine + formate + L-methionine + 3 H(+). It functions in the pathway cofactor biosynthesis; thiamine diphosphate biosynthesis. Its function is as follows. Catalyzes the synthesis of the hydroxymethylpyrimidine phosphate (HMP-P) moiety of thiamine from aminoimidazole ribotide (AIR) in a radical S-adenosyl-L-methionine (SAM)-dependent reaction. The polypeptide is Phosphomethylpyrimidine synthase (Cupriavidus pinatubonensis (strain JMP 134 / LMG 1197) (Cupriavidus necator (strain JMP 134))).